A 529-amino-acid polypeptide reads, in one-letter code: hal-like protein DDB_G0273787/DDB_G0273081 (529 aa).

The segment at residues 151-153 (ASG) is a cross-link (5-imidazolinone (Ala-Gly)). Serine 152 is modified (2,3-didehydroalanine (Ser)).

The protein belongs to the PAL/histidase family. Post-translationally, contains an active site 4-methylidene-imidazol-5-one (MIO), which is formed autocatalytically by cyclization and dehydration of residues Ala-Ser-Gly.

It localises to the cytoplasm. The enzyme catalyses L-histidine = trans-urocanate + NH4(+). It participates in amino-acid degradation; L-histidine degradation into L-glutamate; N-formimidoyl-L-glutamate from L-histidine: step 1/3. This is hal-like protein DDB_G0273787/DDB_G0273081 from Dictyostelium discoideum (Social amoeba).